A 428-amino-acid polypeptide reads, in one-letter code: Chaperone SurA (428 aa).

The N-terminal stretch at 1 to 13 (MLGALLLSGAVHA) is a signal peptide. PpiC domains follow at residues 164–265 (SEEF…KLLE) and 276–375 (RDEV…EVLG). The disordered stretch occupies residues 211 to 230 (TSSSSENALEGGDMGWRKAA).

The protein resides in the periplasm. It catalyses the reaction [protein]-peptidylproline (omega=180) = [protein]-peptidylproline (omega=0). Chaperone involved in the correct folding and assembly of outer membrane proteins. Recognizes specific patterns of aromatic residues and the orientation of their side chains, which are found more frequently in integral outer membrane proteins. May act in both early periplasmic and late outer membrane-associated steps of protein maturation. This is Chaperone SurA from Pseudomonas syringae pv. syringae (strain B728a).